Here is a 269-residue protein sequence, read N- to C-terminus: Polyamine aminopropyltransferase (269 aa).

In terms of domain architecture, PABS spans 1-226 (MVWFFEYYDG…ALWSFIIGGE (226 aa)). Position 28 (Gln28) interacts with S-methyl-5'-thioadenosine. The spermidine site is built by His59 and Asp83. S-methyl-5'-thioadenosine is bound by residues Asp102 and 133–134 (DG). Asp150 acts as the Proton acceptor in catalysis. 150–153 (DSTD) is a binding site for spermidine.

This sequence belongs to the spermidine/spermine synthase family. Homodimer or homotetramer.

It is found in the cytoplasm. It catalyses the reaction S-adenosyl 3-(methylsulfanyl)propylamine + putrescine = S-methyl-5'-thioadenosine + spermidine + H(+). It participates in amine and polyamine biosynthesis; spermidine biosynthesis; spermidine from putrescine: step 1/1. Catalyzes the irreversible transfer of a propylamine group from the amino donor S-adenosylmethioninamine (decarboxy-AdoMet) to putrescine (1,4-diaminobutane) to yield spermidine. This is Polyamine aminopropyltransferase from Archaeoglobus fulgidus (strain ATCC 49558 / DSM 4304 / JCM 9628 / NBRC 100126 / VC-16).